Consider the following 119-residue polypeptide: Large ribosomal subunit protein uL18 (119 aa).

It belongs to the universal ribosomal protein uL18 family. As to quaternary structure, part of the 50S ribosomal subunit; part of the 5S rRNA/L5/L18/L25 subcomplex. Contacts the 5S and 23S rRNAs.

Functionally, this is one of the proteins that bind and probably mediate the attachment of the 5S RNA into the large ribosomal subunit, where it forms part of the central protuberance. This is Large ribosomal subunit protein uL18 from Xylella fastidiosa (strain 9a5c).